Reading from the N-terminus, the 491-residue chain is Anthranilate synthase component 1 (491 aa).

Residues S49 and 271-273 (PYL) each bind L-tryptophan. Chorismate is bound at residue 306-307 (GT). A Mg(2+)-binding site is contributed by E333. Chorismate-binding positions include Y421, R441, 455-457 (GAG), and G457. A Mg(2+)-binding site is contributed by E470.

Belongs to the anthranilate synthase component I family. Heterotetramer consisting of two non-identical subunits: a beta subunit (TrpG) and a large alpha subunit (TrpE). Mg(2+) is required as a cofactor.

It catalyses the reaction chorismate + L-glutamine = anthranilate + pyruvate + L-glutamate + H(+). The protein operates within amino-acid biosynthesis; L-tryptophan biosynthesis; L-tryptophan from chorismate: step 1/5. Feedback inhibited by tryptophan. Part of a heterotetrameric complex that catalyzes the two-step biosynthesis of anthranilate, an intermediate in the biosynthesis of L-tryptophan. In the first step, the glutamine-binding beta subunit (TrpG) of anthranilate synthase (AS) provides the glutamine amidotransferase activity which generates ammonia as a substrate that, along with chorismate, is used in the second step, catalyzed by the large alpha subunit of AS (TrpE) to produce anthranilate. In the absence of TrpG, TrpE can synthesize anthranilate directly from chorismate and high concentrations of ammonia. The sequence is that of Anthranilate synthase component 1 (trpE) from Neisseria meningitidis serogroup B (strain ATCC BAA-335 / MC58).